A 206-amino-acid polypeptide reads, in one-letter code: SOSS complex subunit B2 (206 aa).

Positions 26 to 89 form a DNA-binding region, OB; the sequence is IVLEIGRVTK…SMWKGCLTLY (64 aa). Disordered stretches follow at residues 114–146 and 166–206; these read EPNP…GTGT and SYAG…AFKR. Residues 181–196 are compositionally biased toward polar residues; the sequence is LPGTANNQTVMTTISN.

Belongs to the SOSS-B family. SOSS-B2 subfamily. As to quaternary structure, component of the SOSS complex, composed of SOSS-B (SOSS-B1/NABP2 or SOSS-B2/NABP1), SOSS-A/INTS3 and SOSS-C/INIP. SOSS complexes containing SOSS-B1/NABP2 are more abundant than complexes containing SOSS-B2/NABP1.

The protein resides in the nucleus. Component of the SOSS complex, a multiprotein complex that functions downstream of the MRN complex to promote DNA repair and G2/M checkpoint. In the SOSS complex, acts as a sensor of single-stranded DNA that binds to single-stranded DNA, in particular to polypyrimidines. The SOSS complex associates with DNA lesions and influences diverse endpoints in the cellular DNA damage response including cell-cycle checkpoint activation, recombinational repair and maintenance of genomic stability. Required for efficient homologous recombination-dependent repair of double-strand breaks (DSBs) and ATM-dependent signaling pathways. This is SOSS complex subunit B2 (NABP1) from Bos taurus (Bovine).